We begin with the raw amino-acid sequence, 665 residues long: Syntabulin (665 aa).

Positions 1–22 are enriched in basic and acidic residues; it reads MGPLRESKKEQRVQHQEKEISR. Residues 1-271 form a disordered region; sequence MGPLRESKKE…GVKPPNPEQY (271 aa). The tract at residues 2-421 is sufficient for interaction with KIF5B; the sequence is GPLRESKKEQ…DKLPDGLSLE (420 aa). Residues 35–52 show a composition bias toward low complexity; that stretch reads PQQQQQQQNKVSPASESP. At Ser54 the chain carries Phosphoserine. A compositionally biased stretch (low complexity) spans 61–77; sequence FNPSSSGRSARTISSNS. The segment covering 85 to 101 has biased composition (polar residues); it reads CPSSQSVSPVKTPSDTG. The residue at position 111 (Ser111) is a Phosphoserine. Low complexity predominate over residues 141–162; it reads GGIIKPGSEADFSSSSSTGSIS. The span at 168 to 180 shows a compositional bias: polar residues; that stretch reads MSTTGNKRASFSR. Positions 225 to 245 are enriched in low complexity; sequence SYAPSSPSSSNSGSYKGSDCS. A coiled-coil region spans residues 275-357; that stretch reads LQQKEVTVRH…MRSSLADKDK (83 aa). The segment at 314–421 is sufficient for interaction with STX1A; the sequence is REDWIEEECH…DKLPDGLSLE (108 aa). Phosphoserine is present on residues Ser400 and Ser557. Residues 609–629 traverse the membrane as a helical segment; sequence FLVDLLAVAAPVVPTVLWAFS.

In terms of assembly, interacts with STX1A and KIF5B.

It is found in the golgi apparatus membrane. Functionally, part of a kinesin motor-adapter complex that is critical for the anterograde axonal transport of active zone components and contributes to activity-dependent presynaptic assembly during neuronal development. The chain is Syntabulin (Sybu) from Mus musculus (Mouse).